The primary structure comprises 1529 residues: MKNFKNQNFQKENLNLSFSQKRKKFSGKIGICFFEYNFFQKNFHVQNFPIKKCRLLAQVSEQTPQISSFRQTSNFTPNLIKKKLLNGYSKIHELKLVTIELASPEKIKAWAEKELPNGKIFGEVTNANTFHYRTFKPSKGGLFCEHIFGPLKDFECACGKRQRPSALESRKILEHQKTSRYFCPNCDVEYTWSIIRRYQLGYIKLNAPVTHLWYFKTNPSYLSILFDMKRRHLESIIYCTETITIENTWKYSQQTSILNRSPKDLYLTWQKFFTLEEQLQQYNRIYQNKHQHQKQRKLEFRNLSILQNKISPQINWKNFDQQIVEKNQNNSVFAKNFQTFENIETFGLKRKHSIFENISMQKQKKFGTYFFEEIWKIILQKSYKNSFLFLNSQECFSEHFFQNIYRISNIFLFSSKKIQKFLKFHEIFIFGNTESLNKTILELKNKKRTVNFFSKDFTPFFIDQNVFESHNSLKIKKQYWKSFFFLFEFTRFFLSKKNTKIQNLNVLSKKDFLFLVNLIPFLKKLALFQNLQVFKKNTKKSHAFYIQNLSKKNKSLKKKIFLKKNLFTEQNLISFQNQVQKNKIFSVEPNFSEKIFSTFFSNDFLNSNQTFEFNLFNLFFDVSLNFGKILAFLKLYYEIDFCSFVQKHSFDFEKNYSFKNSFSTKQFELFSNQSTLVSMYETVFFDYFSFFFHFLKIFKFSNFNMSNSVSLEFLNDSEKENIFYSQNFRTQKNFFFSLKALSFLLVGFNYENKQNLLSDPFDSGFEIFPNQNSVFMTQNFFSSKLFFKEKKQKKNNSKKLKKQLEIFISNKPLLSRQNFTERKKQIQNKKVQKFFDFDSMTENFECSFSSEKKFKLFQKKVSNSSLQLTQIQKKFKEPFLYKFIKQKNQKKKKFNNFHVFLSTKANSNLFFFEKKQKQQIQEKFQKMEKNHFLQNSILTIAYNYLWNNDADWKYFIYYNSLFFYEFEDHPIFLYRSLSPIKDTKNNQAFMFSDTNSSAIKFGQSFSSFLSWSIDDLPKNFFVGAGILEKLLTEYTSSELRKMTKQHQILLPKINQMLRFLKQNAKTKKDSLKIQKYFQKREQIIRRLKFLRKFSRRNSNPTFMILKNLPVLPPDLRPILKLQNQIAASDLNRFYQRIIYRNDRLKKFAKDSATNQSFEIKYAQRLLQEAVDNLIQNGKGSVKAETNSRGQPLKSLSEILKGKQGRFRQYLLGKRVDYSGRSVIVVGPELKLYECGLPKEMALELFLPFLIQYILQNKLAQTVVGAKNLLKSDSNLTLHLLHKVIKNIPILLNRAPTLHRLGFQAFLPKLIEGRAILLHPMVCPSFNADFDGDQMAVHIPLTVEARTEAWKFMLATNNLMNSATGEAIILPSQDMVLGCYYLTLDFQSKFVGVQLSNLLKKQNSFFPFSKPTYLGKEKTFQIQGKNFEKFGIQNKAFLLFSNFLSVLNAYQRKEISLHTPVWVKWNSNVDFGNEFSKPVEIRLQINGSWEEIQPKYTTFYNYKNKQLQKIIRTTPGRILMNFMIQQCSMS.

Zn(2+) contacts are provided by C156, C158, C183, and C186. Mg(2+) contacts are provided by D1328, D1330, and D1332.

The protein belongs to the RNA polymerase beta' chain family. RpoC1 subfamily. In plastids the minimal PEP RNA polymerase catalytic core is composed of four subunits: alpha, beta, beta', and beta''. When a (nuclear-encoded) sigma factor is associated with the core the holoenzyme is formed, which can initiate transcription. Mg(2+) is required as a cofactor. Zn(2+) serves as cofactor.

It is found in the plastid. Its subcellular location is the chloroplast. The catalysed reaction is RNA(n) + a ribonucleoside 5'-triphosphate = RNA(n+1) + diphosphate. Functionally, DNA-dependent RNA polymerase catalyzes the transcription of DNA into RNA using the four ribonucleoside triphosphates as substrates. The polypeptide is DNA-directed RNA polymerase subunit beta' (Tetradesmus obliquus (Green alga)).